Here is a 377-residue protein sequence, read N- to C-terminus: Sodium-dependent organic anion transporter (377 aa).

The Extracellular segment spans residues 1–29 (MRANCSSSSACPANSSEEELPVGLEVHGN). An N-linked (GlcNAc...) asparagine glycan is attached at N4. A helical transmembrane segment spans residues 30–50 (LELVFTVVSTVMMGLLMFSLG). The Cytoplasmic portion of the chain corresponds to 51–67 (CSVEIRKLWSHIRRPWG). A helical transmembrane segment spans residues 68-88 (IAVGLLCQFGLMPFTAYLLAI). Residues 89–97 (SFSLKPVQA) are Extracellular-facing. Residues 98–118 (IAVLIMGCCPGGTISNIFTFW) form a helical membrane-spanning segment. Residues 119–133 (VDGDMDLSISMTTCS) lie on the Cytoplasmic side of the membrane. A helical transmembrane segment spans residues 134–154 (TVAALGMMPLCIYLYTWSWSL). The Extracellular segment spans residues 155-159 (QQNLT). N157 carries an N-linked (GlcNAc...) asparagine glycan. The chain crosses the membrane as a helical span at residues 160-180 (IPYQNIGITLVCLTIPVAFGV). Residues 181–195 (YVNYRWPKQSKIILK) lie on the Cytoplasmic side of the membrane. Residues 196 to 216 (IGAVVGGVLLLVVAVAGVVLA) form a helical membrane-spanning segment. Topologically, residues 217-226 (KGSWNSDITL) are extracellular. A helical transmembrane segment spans residues 227–247 (LTISFIFPLIGHVTGFLLALF). Residues 248-266 (THQSWQRCRTISLETGAQN) lie on the Cytoplasmic side of the membrane. Residues 267–285 (IQMCITMLQLSFTAEHLVQ) form a helical membrane-spanning segment. The Extracellular segment spans residues 286-290 (MLSFP). A helical transmembrane segment spans residues 291-311 (LAYGLFQLIDGFLIVAAYQTY). At 312-377 (KRRLKNKHGK…EPVGHITSCE (66 aa)) the chain is on the cytoplasmic side.

It belongs to the bile acid:sodium symporter (BASS) (TC 2.A.28) family. Glycosylated. As to expression, highly expressed in testis, placenta and pancreas. Moderately expressed in heart, lung and mammary gland. Weakly expressed in brain, colon, kidney, liver, ovary, prostate, small intestine, spleen and thymus.

The protein resides in the membrane. The catalysed reaction is estrone 3-sulfate(out) + 2 Na(+)(out) = estrone 3-sulfate(in) + 2 Na(+)(in). It carries out the reaction 17beta-estradiol 3-sulfate(out) + 2 Na(+)(out) = 17beta-estradiol 3-sulfate(in) + 2 Na(+)(in). It catalyses the reaction dehydroepiandrosterone 3-sulfate(out) + 2 Na(+)(out) = dehydroepiandrosterone 3-sulfate(in) + 2 Na(+)(in). The enzyme catalyses androst-5-ene-diol 3-sulfate(out) + 2 Na(+)(out) = androst-5-ene-diol 3-sulfate(in) + 2 Na(+)(in). The catalysed reaction is pregnenolone sulfate(out) + 2 Na(+)(out) = pregnenolone sulfate(in) + 2 Na(+)(in). It carries out the reaction taurolithocholate 3-sulfate(out) + 2 Na(+)(out) = taurolithocholate 3-sulfate(in) + 2 Na(+)(in). It catalyses the reaction androsterone 3alpha-sulfate(out) + 2 Na(+)(out) = androsterone 3alpha-sulfate(in) + 2 Na(+)(in). The enzyme catalyses 5alpha-dihydrotestosterone sulfate(out) + 2 Na(+)(out) = 5alpha-dihydrotestosterone sulfate(in) + 2 Na(+)(in). The catalysed reaction is 17beta-estradiol 17-sulfate(out) + 2 Na(+)(out) = 17beta-estradiol 17-sulfate(in) + 2 Na(+)(in). It carries out the reaction 17alpha-hydroxypregnenolone 3-sulfate(out) + 2 Na(+)(out) = 17alpha-hydroxypregnenolone 3-sulfate(in) + 2 Na(+)(in). It catalyses the reaction epiandrosterone 3-sulfate(out) + 2 Na(+)(out) = epiandrosterone 3-sulfate(in) + 2 Na(+)(in). The enzyme catalyses epitestosterone 17-sulfate(out) + 2 Na(+)(out) = epitestosterone 17-sulfate(in) + 2 Na(+)(in). The catalysed reaction is testosterone 17-sulfate(out) + 2 Na(+)(out) = testosterone 17-sulfate(in) + 2 Na(+)(in). It carries out the reaction 16alpha-hydroxydehydroepiandrosterone 3-sulfate(out) + 2 Na(+)(out) = 16alpha-hydroxydehydroepiandrosterone 3-sulfate(in) + 2 Na(+)(in). Transports sulfoconjugated steroid hormones from the extracellular compartment into the cytosol in a sodium-dependent manner without hydrolysis. Steroid sulfate hormones are commonly considered to be biologically inactive metabolites, that may be activated by steroid sulfatases into free steroids. May play an important role by delivering sulfoconjugated steroids to specific target cells in reproductive organs. May play a role transporting the estriol precursor 16alpha-hydroxydehydroepiandrosterone 3-sulfate (16a-OH-DHEAS) at the fetal blood vessel endothelium. Can also transport other sulfoconjugated molecules such as taurolithocholic acid-3-sulfate and sulfoconjugated pyrenes. This chain is Sodium-dependent organic anion transporter (SLC10A6), found in Homo sapiens (Human).